A 510-amino-acid polypeptide reads, in one-letter code: NAD(P)H-quinone oxidoreductase subunit 2 A, chloroplastic (510 aa).

13 consecutive transmembrane segments (helical) span residues 24–44 (LLLFHGSFIFPECILIFGLIL), 57–77 (IPWLYFISSTSLVMSITALLF), 99–119 (IFQFLILLCSTLCIPLSVEYI), 124–144 (MAITEFLLFVLTATLGGMFLC), 149–169 (LITIFVAPECFSLCSYLLSGY), 183–203 (YLLMGGASSSILVHGFSWLYG), 227–247 (PGISIALIFITVGIGFKLSPA), 295–315 (WHLLLEILAILSMILGNLIAI), 323–343 (MLAYSSIGQIGYVIIGIIVGD), 347–367 (GYASMITYMLFYISMNLGTFA), 395–415 (ALSSALCLLSLGGLPPLAGFF), 418–438 (LHLFWCGWQAGLYFLVSIGLL), and 484–504 (MIVCVIASTIPGISMNPIIAI).

The protein belongs to the complex I subunit 2 family. As to quaternary structure, NDH is composed of at least 16 different subunits, 5 of which are encoded in the nucleus.

Its subcellular location is the plastid. The protein localises to the chloroplast thylakoid membrane. It carries out the reaction a plastoquinone + NADH + (n+1) H(+)(in) = a plastoquinol + NAD(+) + n H(+)(out). The enzyme catalyses a plastoquinone + NADPH + (n+1) H(+)(in) = a plastoquinol + NADP(+) + n H(+)(out). Its function is as follows. NDH shuttles electrons from NAD(P)H:plastoquinone, via FMN and iron-sulfur (Fe-S) centers, to quinones in the photosynthetic chain and possibly in a chloroplast respiratory chain. The immediate electron acceptor for the enzyme in this species is believed to be plastoquinone. Couples the redox reaction to proton translocation, and thus conserves the redox energy in a proton gradient. In Platanus occidentalis (Sycamore), this protein is NAD(P)H-quinone oxidoreductase subunit 2 A, chloroplastic.